Reading from the N-terminus, the 344-residue chain is N-acetyl-gamma-glutamyl-phosphate reductase (344 aa).

Residue Cys150 is part of the active site.

It belongs to the NAGSA dehydrogenase family. Type 1 subfamily.

It localises to the cytoplasm. It catalyses the reaction N-acetyl-L-glutamate 5-semialdehyde + phosphate + NADP(+) = N-acetyl-L-glutamyl 5-phosphate + NADPH + H(+). It functions in the pathway amino-acid biosynthesis; L-arginine biosynthesis; N(2)-acetyl-L-ornithine from L-glutamate: step 3/4. Catalyzes the NADPH-dependent reduction of N-acetyl-5-glutamyl phosphate to yield N-acetyl-L-glutamate 5-semialdehyde. This chain is N-acetyl-gamma-glutamyl-phosphate reductase, found in Pseudomonas fluorescens (strain Pf0-1).